The following is a 496-amino-acid chain: Isocitrate dehydrogenase [NADP] (496 aa).

Residues L88 and T90 each contribute to the NADP(+) site. 5 residues coordinate D-threo-isocitrate: S98, N100, R104, R114, and R137. Residues N193, Q229, and K232 each coordinate NADP(+). Residue D248 coordinates Mg(2+). Residues E277, G281, S282, A283, K285, Y286, and N293 each contribute to the NADP(+) site.

This sequence belongs to the isocitrate and isopropylmalate dehydrogenases family. Homodimer. Mg(2+) serves as cofactor. The cofactor is Mn(2+).

It carries out the reaction D-threo-isocitrate + NADP(+) = 2-oxoglutarate + CO2 + NADPH. In terms of biological role, catalyzes the oxidative decarboxylation of isocitrate to 2-oxoglutarate and carbon dioxide with the concomitant reduction of NADP(+). The sequence is that of Isocitrate dehydrogenase [NADP] (icd) from Thermus thermophilus (strain ATCC 27634 / DSM 579 / HB8).